We begin with the raw amino-acid sequence, 129 residues long: Large ribosomal subunit protein bL19 (129 aa).

The protein belongs to the bacterial ribosomal protein bL19 family.

Functionally, this protein is located at the 30S-50S ribosomal subunit interface and may play a role in the structure and function of the aminoacyl-tRNA binding site. This chain is Large ribosomal subunit protein bL19, found in Rhizorhabdus wittichii (strain DSM 6014 / CCUG 31198 / JCM 15750 / NBRC 105917 / EY 4224 / RW1) (Sphingomonas wittichii).